Reading from the N-terminus, the 59-residue chain is Large ribosomal subunit protein bL32 (59 aa).

The protein belongs to the bacterial ribosomal protein bL32 family.

This Thermodesulfovibrio yellowstonii (strain ATCC 51303 / DSM 11347 / YP87) protein is Large ribosomal subunit protein bL32.